Reading from the N-terminus, the 180-residue chain is Inner membrane-spanning protein YciB (180 aa).

5 consecutive transmembrane segments (helical) span residues 25–45 (QNAT…CYFV), 54–74 (IISV…GNSI), 76–96 (IKIK…MSGI), 118–138 (ITLS…NEIV), and 150–170 (FKVF…LPLL).

The protein belongs to the YciB family.

Its subcellular location is the cell inner membrane. In terms of biological role, plays a role in cell envelope biogenesis, maintenance of cell envelope integrity and membrane homeostasis. The chain is Inner membrane-spanning protein YciB from Rickettsia canadensis (strain McKiel).